Here is a 432-residue protein sequence, read N- to C-terminus: D-amino acid dehydrogenase (432 aa).

3 to 17 (VVILGSGVVGVASAW) is a binding site for FAD.

It belongs to the DadA oxidoreductase family. The cofactor is FAD.

The catalysed reaction is a D-alpha-amino acid + A + H2O = a 2-oxocarboxylate + AH2 + NH4(+). It functions in the pathway amino-acid degradation; D-alanine degradation; NH(3) and pyruvate from D-alanine: step 1/1. Oxidative deamination of D-amino acids. This Shigella boydii serotype 18 (strain CDC 3083-94 / BS512) protein is D-amino acid dehydrogenase.